Reading from the N-terminus, the 252-residue chain is ATP-dependent L-serine kinase (252 aa).

Residue E35 is part of the active site. V73 lines the O-phospho-L-serine pocket. D74 contacts Mg(2+). G75, H76, H77, W107, K231, T233, and H235 together coordinate O-phospho-L-serine.

The protein belongs to the SerK family. In terms of assembly, monomer. Mg(2+) is required as a cofactor.

The enzyme catalyses L-serine + ATP = O-phospho-L-serine + ADP + H(+). Functionally, free serine kinase that uses ATP to phosphorylate L-serine to yield O-phospho-L-serine and ADP. Can use ATP, UTP, CTP, GTP and the inorganic polyphosphates triphosphate and tetraphosphate as phosphate donors, with a preference for nucleoside 5'-triphosphates, but cannot use ADP. The catalytic efficiency is highest for ATP. Is specific for L-serine and cannot phosphorylate structurally similar compounds such as D-serine, L-threonine, L-homoserine, hydroxypyruvate, 3-hydroxypropionate and DL-glycerate. Likely contributes to serine metabolism, including cysteine biosynthesis. The protein is ATP-dependent L-serine kinase of Staphylothermus marinus (strain ATCC 43588 / DSM 3639 / JCM 9404 / F1).